The sequence spans 225 residues: Glycerol-3-phosphate acyltransferase (225 aa).

6 helical membrane-spanning segments follow: residues 6–26, 55–75, 95–115, 135–155, 160–180, and 187–207; these read FFFFFLLFYALGSFPTGLIIG, WGIVVFLFDFAKGLVPAIICL, DIAICLLVILPIFGHMFSIFN, PFIGLLGILFFVLLFIFVGYA, IMATLLVDLLLFFINHHPGIT, and ILYFFIGLSTCFIILKHHSNI.

This sequence belongs to the PlsY family. Probably interacts with PlsX.

The protein localises to the cell membrane. It catalyses the reaction an acyl phosphate + sn-glycerol 3-phosphate = a 1-acyl-sn-glycero-3-phosphate + phosphate. It functions in the pathway lipid metabolism; phospholipid metabolism. In terms of biological role, catalyzes the transfer of an acyl group from acyl-phosphate (acyl-PO(4)) to glycerol-3-phosphate (G3P) to form lysophosphatidic acid (LPA). This enzyme utilizes acyl-phosphate as fatty acyl donor, but not acyl-CoA or acyl-ACP. This chain is Glycerol-3-phosphate acyltransferase, found in Phytoplasma australiense.